A 389-amino-acid chain; its full sequence is MVDLLNSVMNLVAPPATMVVMAFAWPLLSFISFSERAYNSYFATENMEDKVVVITGASSAIGEQIAYEYAKRGANLVLVARREQRLRVVSNKAKQIGANHVIIIAADVIKEDDCRRFITQAVNYYGRVDHLVNTASLGHTFYFEEVSDTTVFPHLLDINFWGNVYPTYVALPYLHQTNGRIVVNASVENWLPLPRMSLYSAAKAALVNFYETLRFELNGDVGITIATHGWIGSEMSGGKFMLEEGAEMQWKEEREVPANGGPLEEFAKMIVAGACRGDAYVKFPNWYDVFLLYRVFTPNVLRWTFKLLLSTEGTRRSSLVGVGSGMPVDESSSQMKLMLEGGPPRVPASPPRYTASPPHYTASPPRYPASPPRYPASPPRFSQFNIQEL.

The helical; Signal-anchor for type II membrane protein transmembrane segment at 11–31 (LVAPPATMVVMAFAWPLLSFI) threads the bilayer. NADP(+)-binding positions include 56–82 (GASS…VARR) and aspartate 107. Serine 186 provides a ligand contact to substrate. Tyrosine 199 (proton acceptor) is an active-site residue. NADP(+) is bound by residues 199-203 (YSAAK) and lysine 203. Residues 337–381 (LMLEGGPPRVPASPPRYTASPPHYTASPPRYPASPPRYPASPPRF) form a disordered region. Residues 365–378 (PRYPASPPRYPASP) are compositionally biased toward pro residues.

It belongs to the short-chain dehydrogenases/reductases (SDR) family.

Its subcellular location is the membrane. The chain is 11-beta-hydroxysteroid dehydrogenase-like 5 (HSD5) from Arabidopsis thaliana (Mouse-ear cress).